A 317-amino-acid polypeptide reads, in one-letter code: Melanocyte-stimulating hormone receptor (317 aa).

At 1–37 the chain is on the extracellular side; that stretch reads MPVQGSQRRLLGSLNSTPTATPRLGLAANQTGARCLE. Asn-29 carries N-linked (GlcNAc...) asparagine glycosylation. A helical membrane pass occupies residues 38 to 63; it reads VSIPDGLFLSLGLVSLVENVLVVVAI. Over 64–72 the chain is Cytoplasmic; sequence ARNRNLHSP. A helical transmembrane segment spans residues 73–93; sequence MYCFICCLALSDLLVSGSNML. Topologically, residues 94–118 are extracellular; that stretch reads ETAVILLLEAGALAARAAVVQQLDN. The helical transmembrane segment at 119-140 threads the bilayer; the sequence is VIDVITCSSMLSSLCFLGAIAV. At 141–163 the chain is on the cytoplasmic side; it reads DRYISIFYALRYHSIVTLRRARR. The chain crosses the membrane as a helical span at residues 164–183; the sequence is VVAAIWVASVLFSTLFIAYC. Topologically, residues 184 to 191 are extracellular; that stretch reads DHAAVLLS. Residues 192–211 form a helical membrane-spanning segment; it reads LVVFFLAMLVLMAVLYVHML. At 212 to 240 the chain is on the cytoplasmic side; it reads ARACQHAQGIAQLHKRQRPAHQGVGLKGA. A helical membrane pass occupies residues 241 to 266; sequence ATLTILLGIFFLCWGPFFLHLTLIVL. At 267-279 the chain is on the extracellular side; that stretch reads CPQHPTCSCIFKN. A helical transmembrane segment spans residues 280-300; the sequence is FNLFLTLIICNAIIDPLIYAF. Residues 301 to 317 are Cytoplasmic-facing; sequence RSQELRRTLKKVLLCSW. Cys-315 is lipidated: S-palmitoyl cysteine.

The protein belongs to the G-protein coupled receptor 1 family. As to quaternary structure, interacts with MGRN1, but does not undergo MGRN1-mediated ubiquitination; this interaction competes with GNAS-binding and thus inhibits agonist-induced cAMP production. Interacts with OPN3; the interaction results in a decrease in MC1R-mediated cAMP signaling and ultimately a decrease in melanin production in melanocytes.

It localises to the cell membrane. Receptor for MSH (alpha, beta and gamma) and ACTH. The activity of this receptor is mediated by G proteins which activate adenylate cyclase. Mediates melanogenesis, the production of eumelanin (black/brown) and phaeomelanin (red/yellow), via regulation of cAMP signaling in melanocytes. The sequence is that of Melanocyte-stimulating hormone receptor (MC1R) from Trachypithecus auratus (Javan langur).